A 399-amino-acid chain; its full sequence is Acetate kinase (399 aa).

Position 7 (Asn7) interacts with Mg(2+). Residue Lys14 participates in ATP binding. Arg91 serves as a coordination point for substrate. Asp148 (proton donor/acceptor) is an active-site residue. ATP contacts are provided by residues 208–212 (HIGNG), 283–285 (DMR), and 331–335 (GVGEN). Glu385 is a Mg(2+) binding site.

It belongs to the acetokinase family. As to quaternary structure, homodimer. The cofactor is Mg(2+). Mn(2+) serves as cofactor.

It is found in the cytoplasm. It catalyses the reaction acetate + ATP = acetyl phosphate + ADP. It functions in the pathway metabolic intermediate biosynthesis; acetyl-CoA biosynthesis; acetyl-CoA from acetate: step 1/2. Functionally, catalyzes the formation of acetyl phosphate from acetate and ATP. Can also catalyze the reverse reaction. This Bacteroides thetaiotaomicron (strain ATCC 29148 / DSM 2079 / JCM 5827 / CCUG 10774 / NCTC 10582 / VPI-5482 / E50) protein is Acetate kinase.